The sequence spans 403 residues: RILP-like protein 1 (403 aa).

Ser-7 carries the post-translational modification Phosphoserine. Residues 10-97 (AAESALEKNV…RLERMDRIEK (88 aa)) form the RH1 domain. Cys-47 bears the S-nitrosocysteine mark. Positions 76-258 (ELDELRLELD…KLRERLQGEH (183 aa)) form a coiled coil. Disordered regions lie at residues 254-275 (LQGEHSQNGEEEPETEPVGEES), 327-352 (EMEEENRIPQPPPIAHPRTSPQPESG), and 384-403 (ANTHRDDGYTEQGQEALQHL). The residue at position 259 (Ser-259) is a Phosphoserine. Acidic residues predominate over residues 262-275 (GEEEPETEPVGEES). In terms of domain architecture, RH2 spans 291-356 (RPRFTLQELR…PQPESGIKRL (66 aa)). Residues 394–403 (EQGQEALQHL) show a composition bias toward polar residues.

This sequence belongs to the RILPL family. As to quaternary structure, interacts (when S-nitrosylated) with GAPDH. Interacts with RAB8A; interaction is dependent on the phosphorylation of 'Thr-72' of RAB8A. Interacts with RAB10 and RAB12; the interaction is dependent on the phosphorylation of 'Thr-73' of RAB10, and 'Ser-105' of RAB12. In terms of processing, S-nitrosylation is required for the interaction with GAPDH. Widely expressed. Expressed at lower level in liver and kidney.

It localises to the cytoplasm. The protein resides in the cytosol. It is found in the cytoskeleton. The protein localises to the microtubule organizing center. Its subcellular location is the centrosome. It localises to the centriole. The protein resides in the cilium basal body. Its function is as follows. Plays a role in the regulation of cell shape and polarity. Plays a role in cellular protein transport, including protein transport away from primary cilia. Neuroprotective protein, which acts by sequestring GAPDH in the cytosol and prevent the apoptotic function of GAPDH in the nucleus. Competes with SIAH1 for binding GAPDH. Does not regulate lysosomal morphology and distribution. Binds to RAB10 following LRRK2-mediated RAB10 phosphorylation which leads to inhibition of ciliogenesis. The sequence is that of RILP-like protein 1 (RILPL1) from Homo sapiens (Human).